We begin with the raw amino-acid sequence, 101 residues long: Large ribosomal subunit protein uL23 (101 aa).

The protein belongs to the universal ribosomal protein uL23 family. As to quaternary structure, part of the 50S ribosomal subunit. Contacts protein L29, and trigger factor when it is bound to the ribosome.

In terms of biological role, one of the early assembly proteins it binds 23S rRNA. One of the proteins that surrounds the polypeptide exit tunnel on the outside of the ribosome. Forms the main docking site for trigger factor binding to the ribosome. This chain is Large ribosomal subunit protein uL23, found in Trichodesmium erythraeum (strain IMS101).